The primary structure comprises 115 residues: Tail tip protein M (115 aa).

The protein belongs to the lambda-like tail tip protein M family.

It localises to the virion. The protein localises to the host cytoplasm. In terms of biological role, part of the distal tail tip which plays a role in DNA ejection during entry, and in tail assembly initiation during exit. May bind tail tip complex associated with tape measure protein and allow tail tube protein polymerization on top of tail tip. This Escherichia coli (Bacteriophage N15) protein is Tail tip protein M.